A 475-amino-acid polypeptide reads, in one-letter code: Sulfate adenylyltransferase subunit 1 (475 aa).

Positions 25–239 constitute a tr-type G domain; sequence KSLLRFLTCG…EVLETVEIQR (215 aa). The interval 34-41 is G1; it reads GSVDDGKS. Residue 34-41 coordinates GTP; sequence GSVDDGKS. The tract at residues 92-96 is G2; sequence GITID. Residues 113–116 are G3; sequence DTPG. GTP is bound by residues 113–117 and 168–171; these read DTPGH and NKMD. The G4 stretch occupies residues 168 to 171; that stretch reads NKMD. Positions 206–208 are G5; sequence SAL.

Belongs to the TRAFAC class translation factor GTPase superfamily. Classic translation factor GTPase family. CysN/NodQ subfamily. As to quaternary structure, heterodimer composed of CysD, the smaller subunit, and CysN.

It catalyses the reaction sulfate + ATP + H(+) = adenosine 5'-phosphosulfate + diphosphate. It participates in sulfur metabolism; hydrogen sulfide biosynthesis; sulfite from sulfate: step 1/3. With CysD forms the ATP sulfurylase (ATPS) that catalyzes the adenylation of sulfate producing adenosine 5'-phosphosulfate (APS) and diphosphate, the first enzymatic step in sulfur assimilation pathway. APS synthesis involves the formation of a high-energy phosphoric-sulfuric acid anhydride bond driven by GTP hydrolysis by CysN coupled to ATP hydrolysis by CysD. This chain is Sulfate adenylyltransferase subunit 1, found in Escherichia coli (strain SE11).